The following is a 422-amino-acid chain: 26S proteasome non-ATPase regulatory subunit 11B (422 aa).

A PCI domain is found at 228–392; it reads AYSYFFEAFE…DVLIIFEEPP (165 aa).

Belongs to the proteasome subunit S9 family. In terms of assembly, component of the lid subcomplex of the 19S proteasome regulatory particle complex (also named PA700 complex). The 26S proteasome consists of a 20S proteasome core and two 19S regulatory subunits.

It localises to the nucleus. Its subcellular location is the cytoplasm. It is found in the cytosol. Functionally, component of the lid subcomplex of the 26S proteasome, a multiprotein complex involved in the ATP-dependent degradation of ubiquitinated proteins. In the complex, psmd11b is required for proteasome assembly. The chain is 26S proteasome non-ATPase regulatory subunit 11B (psmd11b) from Danio rerio (Zebrafish).